Here is a 279-residue protein sequence, read N- to C-terminus: Chromatin modification-related protein EAF5 (279 aa).

The tract at residues 147 to 179 (QLQPHANAGKSGSAGTSATITTTTPHMAHSMDP) is disordered. Residues 154-170 (AGKSGSAGTSATITTTT) are compositionally biased toward low complexity.

It belongs to the EAF5 family. In terms of assembly, component of the NuA4 histone acetyltransferase complex composed of at least ACT1, ARP4, YAF9, VID21, SWC4, EAF3, EAF5, EAF6, EAF7, EPL1, ESA1, TRA1 and YNG2.

It localises to the nucleus. In terms of biological role, component of the NuA4 histone acetyltransferase complex which is involved in transcriptional activation of selected genes principally by acetylation of nucleosomal histone H4 and H2A. The NuA4 complex is also involved in DNA repair. The sequence is that of Chromatin modification-related protein EAF5 (EAF5) from Saccharomyces cerevisiae (strain ATCC 204508 / S288c) (Baker's yeast).